Reading from the N-terminus, the 124-residue chain is Small ribosomal subunit protein bS6 (124 aa).

A disordered region spans residues 96–124 (ETGPSPMMKEVQREEAKKAAAAQPTEAQA). The segment covering 114-124 (AAAAQPTEAQA) has biased composition (low complexity).

Belongs to the bacterial ribosomal protein bS6 family.

Functionally, binds together with bS18 to 16S ribosomal RNA. The protein is Small ribosomal subunit protein bS6 of Burkholderia lata (strain ATCC 17760 / DSM 23089 / LMG 22485 / NCIMB 9086 / R18194 / 383).